The primary structure comprises 332 residues: Eukaryotic translation initiation factor 3 subunit H (332 aa).

The MPN domain occupies 18-153 (VQVDGLTVLK…LKAFRLSDEM (136 aa)). The interval 251–285 (QQQKENYLQRRQQENQSRIQRGEDPLPDEDLSKMF) is disordered.

This sequence belongs to the eIF-3 subunit H family. As to quaternary structure, component of the eukaryotic translation initiation factor 3 (eIF-3) complex.

It is found in the cytoplasm. Its function is as follows. Component of the eukaryotic translation initiation factor 3 (eIF-3) complex, which is involved in protein synthesis of a specialized repertoire of mRNAs and, together with other initiation factors, stimulates binding of mRNA and methionyl-tRNAi to the 40S ribosome. The eIF-3 complex specifically targets and initiates translation of a subset of mRNAs involved in cell proliferation. This is Eukaryotic translation initiation factor 3 subunit H from Nematostella vectensis (Starlet sea anemone).